The sequence spans 686 residues: Glycine--tRNA ligase beta subunit (686 aa).

Belongs to the class-II aminoacyl-tRNA synthetase family. Tetramer of two alpha and two beta subunits.

It localises to the cytoplasm. The catalysed reaction is tRNA(Gly) + glycine + ATP = glycyl-tRNA(Gly) + AMP + diphosphate. The protein is Glycine--tRNA ligase beta subunit of Geobacter metallireducens (strain ATCC 53774 / DSM 7210 / GS-15).